We begin with the raw amino-acid sequence, 124 residues long: Small ribosomal subunit protein uS12c (124 aa).

Disordered stretches follow at residues 1–28 (MPTI…KGCP) and 104–124 (ASGV…QPKT). 2 stretches are compositionally biased toward basic residues: residues 11-20 (ERHKSSKKTK) and 109-124 (DRKK…QPKT).

Belongs to the universal ribosomal protein uS12 family. As to quaternary structure, part of the 30S ribosomal subunit.

The protein resides in the plastid. Its subcellular location is the chloroplast. Its function is as follows. With S4 and S5 plays an important role in translational accuracy. Located at the interface of the 30S and 50S subunits. This chain is Small ribosomal subunit protein uS12c (rps12), found in Gracilaria tenuistipitata var. liui (Red alga).